The following is a 134-amino-acid chain: GSH-induced LITAF domain protein (134 aa).

One can recognise an LITAF domain in the interval 33 to 113 (DPLGAPIQQT…CGNKVADFEK (81 aa)). Positions 53 and 56 each coordinate Zn(2+). Positions 68-88 (PGVAAVVACMMPFMLGFCFLC) are membrane-binding amphipathic helix. Zn(2+) is bound by residues Cys101 and Cys104.

This sequence belongs to the CDIP1/LITAF family. Interacts (via N- and C-terminal) with MIEL1 and LSD1 (via N-terminus).

The protein resides in the cell membrane. Acts as a membrane anchor, bringing other regulators of programmed cell death (PCD) to the plasma membrane. Negatively regulates hypersensitive cell death. This is GSH-induced LITAF domain protein from Arabidopsis thaliana (Mouse-ear cress).